A 351-amino-acid chain; its full sequence is N-acetyl-gamma-glutamyl-phosphate reductase (351 aa).

The active site involves Cys-154.

The protein belongs to the NAGSA dehydrogenase family. Type 1 subfamily.

Its subcellular location is the cytoplasm. The catalysed reaction is N-acetyl-L-glutamate 5-semialdehyde + phosphate + NADP(+) = N-acetyl-L-glutamyl 5-phosphate + NADPH + H(+). Its pathway is amino-acid biosynthesis; L-arginine biosynthesis; N(2)-acetyl-L-ornithine from L-glutamate: step 3/4. In terms of biological role, catalyzes the NADPH-dependent reduction of N-acetyl-5-glutamyl phosphate to yield N-acetyl-L-glutamate 5-semialdehyde. The protein is N-acetyl-gamma-glutamyl-phosphate reductase of Prochlorococcus marinus (strain MIT 9215).